A 312-amino-acid polypeptide reads, in one-letter code: Deoxyribonuclease-1-like 1 (312 aa).

The signal sequence occupies residues 1–35; the sequence is MPSGQPVFPRRVPDAYIAMRGLVVASLLILLVGGT. N102 is a glycosylation site (N-linked (GlcNAc...) asparagine). E113 is an active-site residue. A glycan (N-linked (GlcNAc...) asparagine) is linked at N133. H164 is a catalytic residue. C203 and C240 form a disulfide bridge. N-linked (GlcNAc...) asparagine glycosylation occurs at N239.

Belongs to the DNase I family.

It localises to the endoplasmic reticulum. This chain is Deoxyribonuclease-1-like 1 (Dnase1l1), found in Rattus norvegicus (Rat).